We begin with the raw amino-acid sequence, 106 residues long: Iron-sulfur cluster assembly protein CyaY (106 aa).

Belongs to the frataxin family.

Involved in iron-sulfur (Fe-S) cluster assembly. May act as a regulator of Fe-S biogenesis. The polypeptide is Iron-sulfur cluster assembly protein CyaY (Salmonella paratyphi B (strain ATCC BAA-1250 / SPB7)).